Consider the following 345-residue polypeptide: Probable G-protein coupled receptor 139 (345 aa).

The Extracellular portion of the chain corresponds to 1–21 (MEHTHAHLAANSSACGLGFVP). Residue N11 is glycosylated (N-linked (GlcNAc...) asparagine). Residues 22-42 (VVYYSFLLCLGLPANILTVII) form a helical membrane-spanning segment. The Cytoplasmic portion of the chain corresponds to 43 to 57 (LSQLVARRQKSSYNY). The chain crosses the membrane as a helical span at residues 58–78 (LLALAAADILVLFFIVFVDFL). The Extracellular segment spans residues 79-94 (LEDFILTMQMPLIPDK). The chain crosses the membrane as a helical span at residues 95 to 115 (IIEVLEFSSIHTSIWITVPLT). Residues 116 to 140 (VDRYIAVCHPLKYHTVSYPARTRKV) lie on the Cytoplasmic side of the membrane. A helical transmembrane segment spans residues 141–161 (ILSVYITCFLTSIPYYWWPNI). Residues 162-173 (WTEDYISTSMHH) lie on the Extracellular side of the membrane. The helical transmembrane segment at 174 to 194 (VLVWIHCFTVYLVPCSIFFIL) threads the bilayer. The Cytoplasmic portion of the chain corresponds to 195–220 (NSIIVYKLRRKSNFRLRGYSTGKTTA). The helical transmembrane segment at 221–241 (ILFTITSIFATLWAPRIIMIL) threads the bilayer. Residues 242 to 260 (YHLYGAPIQNPWLVHIMLD) lie on the Extracellular side of the membrane. Residues 261-281 (VANMLALLNTAINFFLYCFIS) form a helical membrane-spanning segment. Residues 282–345 (KRFRTMAAAT…KHGKPIKVSP (64 aa)) are Cytoplasmic-facing.

This sequence belongs to the G-protein coupled receptor 1 family. In terms of tissue distribution, expressed almost exclusively in the brain. Abundantly expressed in the ventrolateral region of caudate putamen, the habenular nucleus, the zona incerta, and the medial mammillary nucleus.

The protein resides in the cell membrane. Orphan receptor. Seems to act through a G(q/11)-mediated pathway. This chain is Probable G-protein coupled receptor 139 (Gpr139), found in Mus musculus (Mouse).